Consider the following 51-residue polypeptide: Large ribosomal subunit protein bL33 (51 aa).

The interval Met-1–Lys-23 is disordered. Polar residues predominate over residues Ser-10–Thr-20.

Belongs to the bacterial ribosomal protein bL33 family.

This chain is Large ribosomal subunit protein bL33, found in Chromobacterium violaceum (strain ATCC 12472 / DSM 30191 / JCM 1249 / CCUG 213 / NBRC 12614 / NCIMB 9131 / NCTC 9757 / MK).